A 120-amino-acid polypeptide reads, in one-letter code: MKKIVCAVVALLLTLPAWANVNAHEEARINAMLNALAQKKDLTFVRNGDAHNCEEAVSHLRLKLGNTRNRIDTAEQFIDKVASSSSITGKPYIVKIPGKSDENAQPYLHALIAETDKNVE.

Residues 1 to 19 (MKKIVCAVVALLLTLPAWA) form the signal peptide.

This is an uncharacterized protein from Salmonella typhimurium (strain LT2 / SGSC1412 / ATCC 700720).